Consider the following 60-residue polypeptide: MTQVVVGQNEAIESALRRFKRQVAKAGIYADIKKHQFFETPQEKRKRKAVARRRQRTRRR.

The disordered stretch occupies residues 39–60 (ETPQEKRKRKAVARRRQRTRRR). Basic residues predominate over residues 44-60 (KRKRKAVARRRQRTRRR).

Belongs to the bacterial ribosomal protein bS21 family.

The chain is Small ribosomal subunit protein bS21 from Microcystis aeruginosa (strain NIES-843 / IAM M-2473).